A 507-amino-acid polypeptide reads, in one-letter code: DNA nucleotidylexotransferase (507 aa).

Positions 11-17 (PLRKKAK) match the Nuclear localization signal motif. Positions 27 to 124 (QHNVKFKEIV…RPVEIQNRHL (98 aa)) constitute a BRCT domain. Positions 254-258 (VGLKT) are involved in DNA binding. Residues 329-334 (GFRRGK) and 338-341 (HDVD) contribute to the a 2'-deoxyribonucleoside 5'-triphosphate site. The Mg(2+) site is built by Asp339, Asp341, and Asp431. 446-447 (GW) contributes to the a 2'-deoxyribonucleoside 5'-triphosphate binding site.

This sequence belongs to the DNA polymerase type-X family. The cofactor is Mg(2+). As to expression, found in the thymus and not in the spleen, kidney, intestine, or liver.

The protein localises to the nucleus. The enzyme catalyses DNA(n) + a 2'-deoxyribonucleoside 5'-triphosphate = DNA(n+1) + diphosphate. In terms of biological role, template-independent DNA polymerase which catalyzes the random addition of deoxynucleoside 5'-triphosphate to the 3'-end of a DNA initiator. One of the in vivo functions of this enzyme is the addition of nucleotides at the junction (N region) of rearranged Ig heavy chain and T-cell receptor gene segments during the maturation of B- and T-cells. This chain is DNA nucleotidylexotransferase (dntt), found in Xenopus laevis (African clawed frog).